The primary structure comprises 565 residues: Sialate:O-sulfotransferase 2 (565 aa).

The Cytoplasmic segment spans residues 1-18; it reads MAKLWFKFQRYFRRKPVR. A helical; Signal-anchor for type II membrane protein membrane pass occupies residues 19 to 41; it reads FFTFLALYLTAGSLVFLHSGFVG. The Extracellular segment spans residues 42 to 565; that stretch reads QPAVSGNQAN…TGVPDDYYPR (524 aa). WSC domains follow at residues 127 to 219 and 230 to 324; these read RAKY…YRLQ and SAVF…YQTQ. N189 and N242 each carry an N-linked (GlcNAc...) asparagine glycan.

It belongs to the WSCD family.

Its subcellular location is the golgi apparatus membrane. In terms of biological role, sialate:O-sulfotransferase which catalyzes 8-O-sulfation at the Sia-glycan level using 3'-phosphoadenosine 5'-phosphosulfate (PAPS) as a donor, forming 8-O-sulfated Sia (Sia8S)-glycans. Displays selectivity toward glycoproteins such as TF/transferrin. This Homo sapiens (Human) protein is Sialate:O-sulfotransferase 2 (WSCD2).